Consider the following 617-residue polypeptide: Estrogen receptor (617 aa).

Residues 1-54 (MSEEQARAEAPAGARQRRRSELEGYSVSLASLKLSPMYPEEEQRTTGGISSTAH) are disordered. The interval 1–186 (MSEEQARAEA…AIGLVKEIRY (186 aa)) is modulating. 2 NR C4-type zinc fingers span residues 187–207 (CSVC…CEGC) and 223–247 (CPAT…LRKC). The segment at residues 187–252 (CSVCSDYASG…RLRKCYEVGM (66 aa)) is a DNA-binding region (nuclear receptor). The tract at residues 253-315 (MKGGFRKERG…GGGVADVVCM (63 aa)) is hinge. Residues 269–303 (NRRPSGLKERERGYSKAQSGSDVREALPQDGQSSS) are disordered. An NR LBD domain is found at 316-552 (SPEQVLLLLL…DLLLEMLDAH (237 aa)). Residues 568 to 617 (VSSSPTTTATTPTTNTTTTTTTTTHHPSNGSTCPADLPSNPPGPGQSPSP) form a disordered region. Positions 573 to 591 (TTTATTPTTNTTTTTTTTT) are enriched in low complexity. Pro residues predominate over residues 606–617 (SNPPGPGQSPSP).

It belongs to the nuclear hormone receptor family. NR3 subfamily. In terms of assembly, binds DNA as a homodimer. Can form a heterodimer with ER-beta. As to expression, ovary and testis.

It is found in the nucleus. Functionally, the steroid hormones and their receptors are involved in the regulation of eukaryotic gene expression and affect cellular proliferation and differentiation in target tissues. The sequence is that of Estrogen receptor (esr1) from Ictalurus punctatus (Channel catfish).